A 95-amino-acid chain; its full sequence is Aspartyl/glutamyl-tRNA(Asn/Gln) amidotransferase subunit C (95 aa).

It belongs to the GatC family. Heterotrimer of A, B and C subunits.

The catalysed reaction is L-glutamyl-tRNA(Gln) + L-glutamine + ATP + H2O = L-glutaminyl-tRNA(Gln) + L-glutamate + ADP + phosphate + H(+). The enzyme catalyses L-aspartyl-tRNA(Asn) + L-glutamine + ATP + H2O = L-asparaginyl-tRNA(Asn) + L-glutamate + ADP + phosphate + 2 H(+). Functionally, allows the formation of correctly charged Asn-tRNA(Asn) or Gln-tRNA(Gln) through the transamidation of misacylated Asp-tRNA(Asn) or Glu-tRNA(Gln) in organisms which lack either or both of asparaginyl-tRNA or glutaminyl-tRNA synthetases. The reaction takes place in the presence of glutamine and ATP through an activated phospho-Asp-tRNA(Asn) or phospho-Glu-tRNA(Gln). The chain is Aspartyl/glutamyl-tRNA(Asn/Gln) amidotransferase subunit C from Jannaschia sp. (strain CCS1).